The chain runs to 394 residues: Elongation factor Tu (394 aa).

A tr-type G domain is found at 10-204 (KPHVNVGTIG…AMDDYIPAPE (195 aa)). The segment at 19-26 (GHVDHGKT) is G1. Residue 19-26 (GHVDHGKT) participates in GTP binding. Threonine 26 is a binding site for Mg(2+). Residues 60 to 64 (GITIN) are G2. A G3 region spans residues 81-84 (DCPG). Residues 81-85 (DCPGH) and 136-139 (NKCD) contribute to the GTP site. Residues 136-139 (NKCD) form a G4 region. Positions 174–176 (SAL) are G5.

The protein belongs to the TRAFAC class translation factor GTPase superfamily. Classic translation factor GTPase family. EF-Tu/EF-1A subfamily. Monomer.

It is found in the cytoplasm. It catalyses the reaction GTP + H2O = GDP + phosphate + H(+). GTP hydrolase that promotes the GTP-dependent binding of aminoacyl-tRNA to the A-site of ribosomes during protein biosynthesis. The polypeptide is Elongation factor Tu (Francisella tularensis subsp. tularensis (strain FSC 198)).